Reading from the N-terminus, the 362-residue chain is 3-dehydroquinate synthase (362 aa).

Residues 71–76 (DGEQYK), 105–109 (GVIGD), 129–130 (TT), Lys142, Lys151, and 169–172 (CLKT) contribute to the NAD(+) site. Zn(2+) contacts are provided by Glu184, His247, and His264.

This sequence belongs to the sugar phosphate cyclases superfamily. Dehydroquinate synthase family. Co(2+) serves as cofactor. Requires Zn(2+) as cofactor. The cofactor is NAD(+).

It is found in the cytoplasm. The catalysed reaction is 7-phospho-2-dehydro-3-deoxy-D-arabino-heptonate = 3-dehydroquinate + phosphate. It functions in the pathway metabolic intermediate biosynthesis; chorismate biosynthesis; chorismate from D-erythrose 4-phosphate and phosphoenolpyruvate: step 2/7. Its function is as follows. Catalyzes the conversion of 3-deoxy-D-arabino-heptulosonate 7-phosphate (DAHP) to dehydroquinate (DHQ). The sequence is that of 3-dehydroquinate synthase from Salmonella enteritidis PT4 (strain P125109).